The chain runs to 362 residues: Ferrochelatase (362 aa).

Positions 228 and 309 each coordinate Fe cation.

This sequence belongs to the ferrochelatase family.

The protein resides in the cytoplasm. The enzyme catalyses heme b + 2 H(+) = protoporphyrin IX + Fe(2+). It participates in porphyrin-containing compound metabolism; protoheme biosynthesis; protoheme from protoporphyrin-IX: step 1/1. Functionally, catalyzes the ferrous insertion into protoporphyrin IX. This is Ferrochelatase from Bordetella bronchiseptica (strain ATCC BAA-588 / NCTC 13252 / RB50) (Alcaligenes bronchisepticus).